Here is a 253-residue protein sequence, read N- to C-terminus: Ribonuclease HII (253 aa).

Residues 30–221 (GPVAGVDEVG…VRRLVVDGEP (192 aa)) enclose the RNase H type-2 domain. A divalent metal cation-binding residues include aspartate 36, glutamate 37, and aspartate 130.

It belongs to the RNase HII family. It depends on Mn(2+) as a cofactor. Mg(2+) serves as cofactor.

The protein resides in the cytoplasm. It carries out the reaction Endonucleolytic cleavage to 5'-phosphomonoester.. Endonuclease that specifically degrades the RNA of RNA-DNA hybrids. This Mycolicibacterium gilvum (strain PYR-GCK) (Mycobacterium gilvum (strain PYR-GCK)) protein is Ribonuclease HII.